We begin with the raw amino-acid sequence, 75 residues long: uncharacterized protein (75 aa).

This is an uncharacterized protein from Acidithiobacillus ferridurans.